The primary structure comprises 350 residues: 4-hydroxythreonine-4-phosphate dehydrogenase (350 aa).

2 residues coordinate substrate: histidine 138 and threonine 139. Histidine 173, histidine 218, and histidine 273 together coordinate a divalent metal cation. Substrate contacts are provided by lysine 281, asparagine 290, and arginine 299.

The protein belongs to the PdxA family. Homodimer. The cofactor is Zn(2+). It depends on Mg(2+) as a cofactor. Requires Co(2+) as cofactor.

It localises to the cytoplasm. It carries out the reaction 4-(phosphooxy)-L-threonine + NAD(+) = 3-amino-2-oxopropyl phosphate + CO2 + NADH. The protein operates within cofactor biosynthesis; pyridoxine 5'-phosphate biosynthesis; pyridoxine 5'-phosphate from D-erythrose 4-phosphate: step 4/5. Catalyzes the NAD(P)-dependent oxidation of 4-(phosphooxy)-L-threonine (HTP) into 2-amino-3-oxo-4-(phosphooxy)butyric acid which spontaneously decarboxylates to form 3-amino-2-oxopropyl phosphate (AHAP). The sequence is that of 4-hydroxythreonine-4-phosphate dehydrogenase from Xanthobacter autotrophicus (strain ATCC BAA-1158 / Py2).